A 204-amino-acid chain; its full sequence is Large ribosomal subunit protein uL4 (204 aa).

A disordered region spans residues 52–76 (AEVRGGGKKPWAQKGGGRARAGSRR).

This sequence belongs to the universal ribosomal protein uL4 family. As to quaternary structure, part of the 50S ribosomal subunit.

One of the primary rRNA binding proteins, this protein initially binds near the 5'-end of the 23S rRNA. It is important during the early stages of 50S assembly. It makes multiple contacts with different domains of the 23S rRNA in the assembled 50S subunit and ribosome. Its function is as follows. Forms part of the polypeptide exit tunnel. This is Large ribosomal subunit protein uL4 from Sulfurimonas denitrificans (strain ATCC 33889 / DSM 1251) (Thiomicrospira denitrificans (strain ATCC 33889 / DSM 1251)).